The sequence spans 152 residues: CMT1A duplicated region transcript 4 protein (152 aa).

Residues 1–11 show a composition bias toward basic and acidic residues; that stretch reads MDARRMKKEEG. 2 disordered regions span residues 1–23 and 60–89; these read MDARRMKKEEGLTENTGLPRKLL and ERPWASRQNKPSSVIQPKRRKSSKSSGKAV. Residues 65-74 show a composition bias toward polar residues; the sequence is SRQNKPSSVI.

In terms of tissue distribution, expressed in fetal skeletal muscle and kidney.

The protein is CMT1A duplicated region transcript 4 protein (CDRT4) of Homo sapiens (Human).